The primary structure comprises 62 residues: UPF0337 protein mll8179 (62 aa).

The disordered stretch occupies residues 1–42 (MRNMVNKDQVAGLAKQLKGSVKQAAGKATGNRRTQAEGMADK).

It belongs to the UPF0337 (CsbD) family.

This is UPF0337 protein mll8179 from Mesorhizobium japonicum (strain LMG 29417 / CECT 9101 / MAFF 303099) (Mesorhizobium loti (strain MAFF 303099)).